Reading from the N-terminus, the 922-residue chain is Non-centrosomal microtubule array protein 1 (922 aa).

A compositionally biased stretch (polar residues) spans 1-10; it reads MSNERVSTGS. 4 disordered regions span residues 1 to 134, 250 to 277, 465 to 491, and 533 to 563; these read MSNE…HLPP, PVRLRKRGDTSRRDAVEAGFEPRDTVPR, KSRHLSESRDEMRGGAERRGSGGQMNL, and TQKEQSSHSTPSQSRHSSSKSSHFNGSSNLS. Composition is skewed to basic and acidic residues over residues 43–54 and 70–94; these read SMERKDMPDRPK and PKDRSSDSGDGDSPRPRKFSSKECA. The segment covering 99–113 has biased composition (low complexity); the sequence is SNTSSEHSSRSNSST. 2 stretches are compositionally biased toward basic and acidic residues: residues 256–276 and 468–484; these read RGDTSRRDAVEAGFEPRDTVP and HLSESRDEMRGGAERRG. The span at 539-563 shows a compositional bias: low complexity; that stretch reads SHSTPSQSRHSSSKSSHFNGSSNLS. The stretch at 564 to 728 forms a coiled coil; sequence TSEQLRLQEM…RSVSTLRLEQ (165 aa).

It is found in the cytoplasm. The protein resides in the cytoskeleton. Its subcellular location is the apical cell membrane. The protein localises to the cell junction. It localises to the hemidesmosome. It is found in the adherens junction. Functionally, plays a role in the assembly of microtubule arrays in the germline acting redundantly with ptrn-1 to control circumferential microtubule assembly along the body which is necessary for larval development, viability, and morphology and integrity of the epidermis. Required for microtubule stability and anchorage by binding to microtubule minus ends. Recruited to hemidesomosomes in early embryonic elongation to direct the nucleation and growth of non-centrosomal microtubules. Its function is as follows. Required for normal nuclear migration in the embryonic epidermis. In terms of biological role, directs the assembly of non-centrosomal microtubule arrays that determine the position of nuclei within intracellular compartments in the epidermis and this is independent of ptrn-1 activity. This chain is Non-centrosomal microtubule array protein 1, found in Caenorhabditis elegans.